Consider the following 215-residue polypeptide: Urease accessory protein UreE (215 aa).

Positions 134-215 are disordered; that stretch reads FDPEGGAYAP…HGHSHKHDHK (82 aa). Basic and acidic residues predominate over residues 164–206; that stretch reads GHHDHADHEHDHKHDHGKHDHAGHDHAHDHHVHDEHCGHDHGH.

This sequence belongs to the UreE family.

The protein localises to the cytoplasm. Involved in urease metallocenter assembly. Binds nickel. Probably functions as a nickel donor during metallocenter assembly. In Rhodopseudomonas palustris (strain HaA2), this protein is Urease accessory protein UreE.